A 520-amino-acid chain; its full sequence is Ubiquitin carboxyl-terminal hydrolase 3 (520 aa).

Position 1 is an N-acetylmethionine (Met1). The segment at 1–121 adopts a UBP-type zinc-finger fold; the sequence is MECPHLSSSV…QKVREHLQNL (121 aa). Residues Cys3, His5, Cys29, Cys32, Cys41, Cys44, Cys49, His56, His60, His82, Cys95, and Cys98 each contribute to the Zn(2+) site. The 353-residue stretch at 159 to 511 folds into the USP domain; sequence TGLRNLGNTC…KAYILFYVER (353 aa). Cys168 serves as the catalytic Nucleophile. The active-site Proton acceptor is His471.

The protein belongs to the peptidase C19 family. USP3 subfamily. Interacts (via UBP-type domain) with H2A; the interaction is less efficient than with monoubiquitinated H2A.

The protein localises to the nucleus. Its subcellular location is the cytoplasm. It catalyses the reaction Thiol-dependent hydrolysis of ester, thioester, amide, peptide and isopeptide bonds formed by the C-terminal Gly of ubiquitin (a 76-residue protein attached to proteins as an intracellular targeting signal).. Its function is as follows. Deubiquitinase that plays a role in several cellular processes including transcriptional regulation, cell cycle progression or innate immunity. In response to DNA damage, deubiquitinates monoubiquitinated target proteins such as histone H2A and H2AX and thereby counteracts RNF168- and RNF8-mediated ubiquitination. In turn, participates in the recruitment of DNA damage repair factors to DNA break sites. Required for proper progression through S phase and subsequent mitotic entry. Acts as a positive regulator of TP53 by deubiquitinating and stabilizing it to promote normal cell proliferation and transformation. Participates in establishing tolerance innate immune memory through non-transcriptional feedback. Mechanistically, negatively regulates TLR-induced NF-kappa-B signaling by targeting and removing the 'Lys-63'-linked polyubiquitin chains on MYD88. Negatively regulates the activation of type I interferon signaling by mediating 'Lys-63'-linked polyubiquitin chains on RIGI and IFIH1. Also deubiquinates ASC/PYCARD, the central adapter mediating the assembly and activation of most inflammasomes, and thereby promotes inflammasome activation. The sequence is that of Ubiquitin carboxyl-terminal hydrolase 3 (Usp3) from Mus musculus (Mouse).